A 1407-amino-acid polypeptide reads, in one-letter code: DNA-directed RNA polymerase subunit beta' (1407 aa).

The Zn(2+) site is built by Cys-70, Cys-72, Cys-85, and Cys-88. The Mg(2+) site is built by Asp-460, Asp-462, and Asp-464. The Zn(2+) site is built by Cys-814, Cys-888, Cys-895, and Cys-898. An N6-acetyllysine modification is found at Lys-972.

It belongs to the RNA polymerase beta' chain family. As to quaternary structure, the RNAP catalytic core consists of 2 alpha, 1 beta, 1 beta' and 1 omega subunit. When a sigma factor is associated with the core the holoenzyme is formed, which can initiate transcription. The cofactor is Mg(2+). Zn(2+) is required as a cofactor.

It catalyses the reaction RNA(n) + a ribonucleoside 5'-triphosphate = RNA(n+1) + diphosphate. Functionally, DNA-dependent RNA polymerase catalyzes the transcription of DNA into RNA using the four ribonucleoside triphosphates as substrates. This Shigella flexneri serotype 5b (strain 8401) protein is DNA-directed RNA polymerase subunit beta'.